The chain runs to 410 residues: Structural protein ORF142 (410 aa).

2 disordered regions span residues 1 to 24 and 156 to 197; these read MNQN…HVDT and PTST…VNIS. Residues 161-188 are compositionally biased toward acidic residues; sequence DDNDNENRSDDDDDDDDYRNDREEVEDS.

It localises to the virion. The chain is Structural protein ORF142 from Trichoplusia ni ascovirus 2c (TnAV-2c).